The chain runs to 172 residues: 3-hydroxydecanoyl-[acyl-carrier-protein] dehydratase (172 aa).

Histidine 71 is a catalytic residue.

This sequence belongs to the thioester dehydratase family. FabA subfamily. Homodimer.

It is found in the cytoplasm. It carries out the reaction a (3R)-hydroxyacyl-[ACP] = a (2E)-enoyl-[ACP] + H2O. It catalyses the reaction (3R)-hydroxydecanoyl-[ACP] = (2E)-decenoyl-[ACP] + H2O. The enzyme catalyses (2E)-decenoyl-[ACP] = (3Z)-decenoyl-[ACP]. The protein operates within lipid metabolism; fatty acid biosynthesis. Necessary for the introduction of cis unsaturation into fatty acids. Catalyzes the dehydration of (3R)-3-hydroxydecanoyl-ACP to E-(2)-decenoyl-ACP and then its isomerization to Z-(3)-decenoyl-ACP. Can catalyze the dehydratase reaction for beta-hydroxyacyl-ACPs with saturated chain lengths up to 16:0, being most active on intermediate chain length. This chain is 3-hydroxydecanoyl-[acyl-carrier-protein] dehydratase, found in Serratia proteamaculans (strain 568).